An 84-amino-acid polypeptide reads, in one-letter code: MKLLYLFLAILLAIEEPVISGKRHILRCMGNSGICRASCKKNEQPYLYCRNYQSCCLQSYMRISISGKEEDTDWSYEKQWPRLP.

An N-terminal signal peptide occupies residues 1–21 (MKLLYLFLAILLAIEEPVISG). Cystine bridges form between C28–C55, C35–C49, and C39–C56.

It belongs to the beta-defensin family.

The protein resides in the secreted. Functionally, has antibacterial activity. The polypeptide is Beta-defensin 119 (DEFB119) (Gorilla gorilla gorilla (Western lowland gorilla)).